The chain runs to 357 residues: uncharacterized protein (357 aa).

This is an uncharacterized protein from Mycoplasma pneumoniae (strain ATCC 29342 / M129 / Subtype 1) (Mycoplasmoides pneumoniae).